A 117-amino-acid polypeptide reads, in one-letter code: Immunoglobulin lambda variable 7-43 (117 aa).

The signal sequence occupies residues Met-1–Ser-19. The segment at Gln-20 to Ser-44 is framework-1. In terms of domain architecture, Ig-like spans Gln-20–Gln-117. Cys-41 and Cys-109 are joined by a disulfide. Residues Thr-45–Tyr-53 form a complementarity-determining-1 region. The interval Pro-54–Tyr-70 is framework-2. A complementarity-determining-2 region spans residues Ser-71–Ser-73. The interval Asn-74 to Cys-109 is framework-3. Positions Leu-110–Gln-117 are complementarity-determining-3.

Immunoglobulins are composed of two identical heavy chains and two identical light chains; disulfide-linked.

It localises to the secreted. It is found in the cell membrane. Functionally, v region of the variable domain of immunoglobulin light chains that participates in the antigen recognition. Immunoglobulins, also known as antibodies, are membrane-bound or secreted glycoproteins produced by B lymphocytes. In the recognition phase of humoral immunity, the membrane-bound immunoglobulins serve as receptors which, upon binding of a specific antigen, trigger the clonal expansion and differentiation of B lymphocytes into immunoglobulins-secreting plasma cells. Secreted immunoglobulins mediate the effector phase of humoral immunity, which results in the elimination of bound antigens. The antigen binding site is formed by the variable domain of one heavy chain, together with that of its associated light chain. Thus, each immunoglobulin has two antigen binding sites with remarkable affinity for a particular antigen. The variable domains are assembled by a process called V-(D)-J rearrangement and can then be subjected to somatic hypermutations which, after exposure to antigen and selection, allow affinity maturation for a particular antigen. The chain is Immunoglobulin lambda variable 7-43 from Homo sapiens (Human).